Consider the following 126-residue polypeptide: Glycine cleavage system H protein (126 aa).

A Lipoyl-binding domain is found at 24–105 (TLTVGITDHA…AYGVWLFKIK (82 aa)). The residue at position 65 (Lys-65) is an N6-lipoyllysine.

It belongs to the GcvH family. In terms of assembly, the glycine cleavage system is composed of four proteins: P, T, L and H. (R)-lipoate serves as cofactor.

The glycine cleavage system catalyzes the degradation of glycine. The H protein shuttles the methylamine group of glycine from the P protein to the T protein. The chain is Glycine cleavage system H protein from Burkholderia cenocepacia (strain ATCC BAA-245 / DSM 16553 / LMG 16656 / NCTC 13227 / J2315 / CF5610) (Burkholderia cepacia (strain J2315)).